We begin with the raw amino-acid sequence, 607 residues long: Runt-related transcription factor 2 (607 aa).

The interval 1–88 (MLHSPHKQPQ…TMASNSLFSA (88 aa)) is interaction with IFI204. Over residues 100–112 (PSTSRRFSPPSSS) the composition is skewed to low complexity. The segment at 100 to 126 (PSTSRRFSPPSSSLQPGKMSDVSPVVA) is disordered. The Runt domain occupies 187–315 (TMVEIIADHP…TVDGPREPRR (129 aa)). Residues 242–258 (VMAGNDENYSAELRNAS) are required for interaction with FOXO1. Positions 307 to 430 (VDGPREPRRH…VPRRISDDDT (124 aa)) are disordered. Lys324 participates in a covalent cross-link: Glycyl lysine isopeptide (Lys-Gly) (interchain with G-Cter in SUMO2). Position 353 is an asymmetric dimethylarginine (Arg353). A compositionally biased stretch (polar residues) spans 353–412 (RPSLNSAPSPFNPQGQSQITDPRQAQSSPPWSYDQSYPSYLSQMTSPSIHSTTPLSSTRG). Residues 422 to 525 (PRRISDDDTA…SQSQSGPFQT (104 aa)) are interaction with KAT6A. The interaction with KAT6B stretch occupies residues 460 to 554 (RQFPSISSLT…VPGGDRSPSR (95 aa)). Ser537 is modified (phosphoserine; by CDK1). The tract at residues 548–607 (GDRSPSRMVPPCTTTSNGSTLLNPNLPNQNDGVDADGSHSSSPTVLNSSGRMDESVWRPY) is disordered. Composition is skewed to polar residues over residues 559-578 (CTTTSNGSTLLNPNLPNQND) and 585-597 (SHSSSPTVLNSSG). Over residues 598–607 (RMDESVWRPY) the composition is skewed to basic and acidic residues.

Heterodimer of an alpha and a beta subunit. The alpha subunit binds DNA as a monomer and through the Runt domain. DNA-binding is increased by heterodimerization. Interacts with XRCC6 (Ku70) and XRCC5 (Ku80). Interacts with CCNB1, KAT6A and KAT6B. Interacts with HIVEP3. Interacts with IFI204. Interaction with SATB2; the interaction results in enhanced DNA binding and transactivation by these transcription factors. Binds to HIPK3. Interacts with FOXO1 (via a C-terminal region); the interaction inhibits RUNX2 transcriptional activity towards BGLAP. Interacts with FOXP3. Interacts with TMEM119. Interacts with OLFM2. Interacts with IPO7; the interaction inhibits RUNX2 nuclear translocation in osteoblasts. In terms of assembly, interacts with DDX5. In terms of processing, phosphorylated; probably by MAP kinases (MAPK). Phosphorylation by HIPK3 is required for the SPEN/MINT and FGF2 transactivation during osteoblastic differentiation. Phosphorylation at Ser-537 by CDK1 promotes endothelial cell proliferation required for tumor angiogenesis probably by facilitating cell cycle progression. Found in thymus and testis, T-cell lines but not in B-cell lines. Isoform 2 is exclusively found in bone, particularly in osteoblasts; isoforms 3 and 4 are expressed in T-cell lines; isoforms 5, 6, 7, 8 and 9 can be found in osteoblasts and osteosarcoma cell lines.

The protein resides in the nucleus. Its subcellular location is the cytoplasm. Transcription factor involved in osteoblastic differentiation and skeletal morphogenesis. Essential for the maturation of osteoblasts and both intramembranous and endochondral ossification. CBF binds to the core site, 5'-PYGPYGGT-3', of a number of enhancers and promoters, including murine leukemia virus, polyomavirus enhancer, T-cell receptor enhancers, osteocalcin, osteopontin, bone sialoprotein, alpha 1(I) collagen, LCK, IL-3 and GM-CSF promoters. Inhibits KAT6B-dependent transcriptional activation. In osteoblasts, supports transcription activation: synergizes with SPEN/MINT to enhance FGFR2-mediated activation of the osteocalcin FGF-responsive element (OCFRE). In Mus musculus (Mouse), this protein is Runt-related transcription factor 2 (Runx2).